Reading from the N-terminus, the 562-residue chain is NAD-dependent malic enzyme (562 aa).

Residue Y101 is the Proton donor of the active site. R154 contacts NAD(+). Catalysis depends on K172, which acts as the Proton acceptor. Positions 243, 244, and 267 each coordinate a divalent metal cation. 2 residues coordinate NAD(+): D267 and N415.

The protein belongs to the malic enzymes family. Homotetramer. The cofactor is Mg(2+). Mn(2+) is required as a cofactor.

The enzyme catalyses (S)-malate + NAD(+) = pyruvate + CO2 + NADH. It carries out the reaction oxaloacetate + H(+) = pyruvate + CO2. The sequence is that of NAD-dependent malic enzyme from Aliivibrio fischeri (strain ATCC 700601 / ES114) (Vibrio fischeri).